Consider the following 279-residue polypeptide: Undecaprenyl-diphosphatase (279 aa).

Transmembrane regions (helical) follow at residues 1–21 (MVLE…LPIS), 39–59 (GRFF…LYFF), 96–116 (LLLV…VRFV), 128–148 (FTMG…DALF), 155–175 (IFQI…FAII), 201–221 (FSFL…LVAG), 231–251 (YSLI…SALL), and 259–279 (FVLF…VSFF).

The protein belongs to the UppP family.

The protein localises to the cell membrane. It catalyses the reaction di-trans,octa-cis-undecaprenyl diphosphate + H2O = di-trans,octa-cis-undecaprenyl phosphate + phosphate + H(+). Its function is as follows. Catalyzes the dephosphorylation of undecaprenyl diphosphate (UPP). Confers resistance to bacitracin. This Tropheryma whipplei (strain Twist) (Whipple's bacillus) protein is Undecaprenyl-diphosphatase.